Consider the following 348-residue polypeptide: MRRKNNNKIWIWVATLILSISALYGQKINQIAQIVGIRDNSLVGYGLVIGLNGTGDKSGSKFTMQSIANMLESVNVKLSANDIKSKNVAAVMVTASLPPFARQGDKLDILVSSIGDAKSINGGTLVMTPLTGVDGNIYALAQGNITFGESGSTLSGTIIGGASVEREIAYNLYNQENATLSLKSSDLQNAIKIQQALNDVFRDAIAVAVDARTIKLKKPENLSMVEFLALVEEVEIDYSRKERIVIDEKSGTIVAGVGITIDPVVVTHGDITIKISDEMPDDPEAIKLEDGTMMSRAQGTISSTNGTKPTVSSVVKALQRMGATPRNVISILESMKKSGALNADIEVM.

The signal sequence occupies residues 1-24; that stretch reads MRRKNNNKIWIWVATLILSISALY.

The protein belongs to the FlgI family. In terms of assembly, the basal body constitutes a major portion of the flagellar organelle and consists of four rings (L,P,S, and M) mounted on a central rod.

The protein resides in the periplasm. The protein localises to the bacterial flagellum basal body. Assembles around the rod to form the L-ring and probably protects the motor/basal body from shearing forces during rotation. The polypeptide is Flagellar P-ring protein (Helicobacter hepaticus (strain ATCC 51449 / 3B1)).